A 302-amino-acid polypeptide reads, in one-letter code: Ribosomal RNA small subunit methyltransferase H (302 aa).

S-adenosyl-L-methionine contacts are provided by residues 34 to 36 (AGH), D53, F80, D101, and Q108. The tract at residues 283–302 (LEENPRSKSAKMRVLKKIER) is disordered. The span at 290–302 (KSAKMRVLKKIER) shows a compositional bias: basic residues.

It belongs to the methyltransferase superfamily. RsmH family.

It localises to the cytoplasm. It catalyses the reaction cytidine(1402) in 16S rRNA + S-adenosyl-L-methionine = N(4)-methylcytidine(1402) in 16S rRNA + S-adenosyl-L-homocysteine + H(+). In terms of biological role, specifically methylates the N4 position of cytidine in position 1402 (C1402) of 16S rRNA. The polypeptide is Ribosomal RNA small subunit methyltransferase H (Mycoplasma mobile (strain ATCC 43663 / 163K / NCTC 11711) (Mesomycoplasma mobile)).